Consider the following 426-residue polypeptide: Glutamate-1-semialdehyde 2,1-aminomutase (426 aa).

Lys265 is modified (N6-(pyridoxal phosphate)lysine).

This sequence belongs to the class-III pyridoxal-phosphate-dependent aminotransferase family. HemL subfamily. Homodimer. It depends on pyridoxal 5'-phosphate as a cofactor.

It is found in the cytoplasm. The enzyme catalyses (S)-4-amino-5-oxopentanoate = 5-aminolevulinate. It participates in porphyrin-containing compound metabolism; protoporphyrin-IX biosynthesis; 5-aminolevulinate from L-glutamyl-tRNA(Glu): step 2/2. In Methylococcus capsulatus (strain ATCC 33009 / NCIMB 11132 / Bath), this protein is Glutamate-1-semialdehyde 2,1-aminomutase.